The following is a 407-amino-acid chain: Methylthioribose kinase (407 aa).

ATP contacts are provided by residues Asn-40, Lys-57, and 111-113; that span reads EDL. Substrate is bound at residue Asp-229. 246-248 is an ATP binding site; sequence DAE. Arg-344 lines the substrate pocket.

This sequence belongs to the methylthioribose kinase family. As to quaternary structure, homodimer.

It catalyses the reaction 5-(methylsulfanyl)-D-ribose + ATP = 5-(methylsulfanyl)-alpha-D-ribose 1-phosphate + ADP + H(+). It functions in the pathway amino-acid biosynthesis; L-methionine biosynthesis via salvage pathway; S-methyl-5-thio-alpha-D-ribose 1-phosphate from S-methyl-5'-thioadenosine (hydrolase route): step 2/2. Catalyzes the phosphorylation of methylthioribose into methylthioribose-1-phosphate. This chain is Methylthioribose kinase, found in Yersinia pseudotuberculosis serotype IB (strain PB1/+).